A 320-amino-acid polypeptide reads, in one-letter code: Glycerol-3-phosphate dehydrogenase [NAD(P)+] (320 aa).

Residues S14, F15, R35, and K109 each contribute to the NADPH site. 2 residues coordinate sn-glycerol 3-phosphate: K109 and G137. Residue A141 participates in NADPH binding. Residues K192, D248, S258, R259, and N260 each contribute to the sn-glycerol 3-phosphate site. Catalysis depends on K192, which acts as the Proton acceptor. R259 is an NADPH binding site. NADPH-binding residues include L283 and E285.

This sequence belongs to the NAD-dependent glycerol-3-phosphate dehydrogenase family.

It localises to the cytoplasm. It carries out the reaction sn-glycerol 3-phosphate + NAD(+) = dihydroxyacetone phosphate + NADH + H(+). The catalysed reaction is sn-glycerol 3-phosphate + NADP(+) = dihydroxyacetone phosphate + NADPH + H(+). It functions in the pathway membrane lipid metabolism; glycerophospholipid metabolism. Functionally, catalyzes the reduction of the glycolytic intermediate dihydroxyacetone phosphate (DHAP) to sn-glycerol 3-phosphate (G3P), the key precursor for phospholipid synthesis. The sequence is that of Glycerol-3-phosphate dehydrogenase [NAD(P)+] from Rickettsia typhi (strain ATCC VR-144 / Wilmington).